The primary structure comprises 137 residues: Putative pre-16S rRNA nuclease (137 aa).

It belongs to the YqgF nuclease family.

Its subcellular location is the cytoplasm. Functionally, could be a nuclease involved in processing of the 5'-end of pre-16S rRNA. The chain is Putative pre-16S rRNA nuclease from Oceanobacillus iheyensis (strain DSM 14371 / CIP 107618 / JCM 11309 / KCTC 3954 / HTE831).